Consider the following 385-residue polypeptide: tRNA-specific 2-thiouridylase MnmA (385 aa).

ATP contacts are provided by residues 18–25 (AMSGGVDS) and leucine 44. The active-site Nucleophile is cysteine 112. Cysteine 112 and cysteine 209 are oxidised to a cystine. ATP is bound at residue glycine 136. The segment at 159–161 (RDQ) is interaction with tRNA. Cysteine 209 (cysteine persulfide intermediate) is an active-site residue.

This sequence belongs to the MnmA/TRMU family.

The protein localises to the cytoplasm. It catalyses the reaction S-sulfanyl-L-cysteinyl-[protein] + uridine(34) in tRNA + AH2 + ATP = 2-thiouridine(34) in tRNA + L-cysteinyl-[protein] + A + AMP + diphosphate + H(+). Functionally, catalyzes the 2-thiolation of uridine at the wobble position (U34) of tRNA, leading to the formation of s(2)U34. The polypeptide is tRNA-specific 2-thiouridylase MnmA (Methylorubrum extorquens (strain PA1) (Methylobacterium extorquens)).